Reading from the N-terminus, the 377-residue chain is Queuine tRNA-ribosyltransferase (377 aa).

Catalysis depends on D89, which acts as the Proton acceptor. Residues 89-93, D143, Q187, and G214 each bind substrate; that span reads DSGGF. The RNA binding stretch occupies residues 245-251; that stretch reads GVGKPED. D264 serves as the catalytic Nucleophile. The interval 269–273 is RNA binding; important for wobble base 34 recognition; the sequence is TRNAR. Positions 302, 304, 307, and 333 each coordinate Zn(2+).

Belongs to the queuine tRNA-ribosyltransferase family. As to quaternary structure, homodimer. Within each dimer, one monomer is responsible for RNA recognition and catalysis, while the other monomer binds to the replacement base PreQ1. Requires Zn(2+) as cofactor.

The enzyme catalyses 7-aminomethyl-7-carbaguanine + guanosine(34) in tRNA = 7-aminomethyl-7-carbaguanosine(34) in tRNA + guanine. It participates in tRNA modification; tRNA-queuosine biosynthesis. Its function is as follows. Catalyzes the base-exchange of a guanine (G) residue with the queuine precursor 7-aminomethyl-7-deazaguanine (PreQ1) at position 34 (anticodon wobble position) in tRNAs with GU(N) anticodons (tRNA-Asp, -Asn, -His and -Tyr). Catalysis occurs through a double-displacement mechanism. The nucleophile active site attacks the C1' of nucleotide 34 to detach the guanine base from the RNA, forming a covalent enzyme-RNA intermediate. The proton acceptor active site deprotonates the incoming PreQ1, allowing a nucleophilic attack on the C1' of the ribose to form the product. After dissociation, two additional enzymatic reactions on the tRNA convert PreQ1 to queuine (Q), resulting in the hypermodified nucleoside queuosine (7-(((4,5-cis-dihydroxy-2-cyclopenten-1-yl)amino)methyl)-7-deazaguanosine). The protein is Queuine tRNA-ribosyltransferase of Shewanella sediminis (strain HAW-EB3).